A 713-amino-acid chain; its full sequence is Cyclomaltodextrin glucanotransferase (713 aa).

Positions 1-27 (MKKQVKWLTSVSMSVGIALGAALPVWA) are cleaved as a signal peptide. Positions 28–165 (SPDTSVNNKL…NIKVVMDFAP (138 aa)) are A1. Ca(2+) is bound by residues Asp54, Asn56, Asn59, Asn60, Gly78, and Asp80. 127–128 (YW) is a binding site for substrate. Asn166 provides a ligand contact to Ca(2+). Residues 166–229 (NHTNPASSTD…NLYDLADINQ (64 aa)) are b. His167 contributes to the substrate binding site. Ile217 lines the Ca(2+) pocket. 220-223 (NLYD) lines the substrate pocket. Asp226 is a binding site for Ca(2+). The interval 230–434 (NNNTIDSYLK…LRKSNPALAY (205 aa)) is A2. Arg254 is a binding site for substrate. The active-site Nucleophile is the Asp256. 259 to 260 (KH) contacts substrate. His260 provides a ligand contact to Ca(2+). Glu285 acts as the Proton donor in catalysis. 3 residues coordinate substrate: His355, Asp399, and Arg403. A c region spans residues 435–522 (GSTTQRWVNS…GTAVWQYTTT (88 aa)). Residues 523–609 (ESSPIIGNVG…SAAFNNFNVL (87 aa)) are d. Residues 526–606 (PIIGNVGPTM…GTTSAAFNNF (81 aa)) form the IPT/TIG domain. In terms of domain architecture, CBM20 spans 608–713 (VLTADQVTVR…VATVTVDWQN (106 aa)). The tract at residues 610 to 713 (TADQVTVRFK…VATVTVDWQN (104 aa)) is e.

It belongs to the glycosyl hydrolase 13 family. Monomer. It depends on Ca(2+) as a cofactor.

It localises to the secreted. The catalysed reaction is Cyclizes part of a (1-&gt;4)-alpha-D-glucan chain by formation of a (1-&gt;4)-alpha-D-glucosidic bond.. The protein is Cyclomaltodextrin glucanotransferase of Paenibacillus macerans (Bacillus macerans).